The chain runs to 282 residues: Bifunctional protein FolD (282 aa).

NADP(+) contacts are provided by residues 165-167 (NRS), Ser-190, and Ile-231.

The protein belongs to the tetrahydrofolate dehydrogenase/cyclohydrolase family. Homodimer.

The enzyme catalyses (6R)-5,10-methylene-5,6,7,8-tetrahydrofolate + NADP(+) = (6R)-5,10-methenyltetrahydrofolate + NADPH. The catalysed reaction is (6R)-5,10-methenyltetrahydrofolate + H2O = (6R)-10-formyltetrahydrofolate + H(+). The protein operates within one-carbon metabolism; tetrahydrofolate interconversion. In terms of biological role, catalyzes the oxidation of 5,10-methylenetetrahydrofolate to 5,10-methenyltetrahydrofolate and then the hydrolysis of 5,10-methenyltetrahydrofolate to 10-formyltetrahydrofolate. The protein is Bifunctional protein FolD of Clostridium botulinum (strain 657 / Type Ba4).